The chain runs to 227 residues: Cytochrome c oxidase subunit 2 (227 aa).

The Mitochondrial intermembrane segment spans residues Met1 to Ser14. Residues Pro15–Met45 traverse the membrane as a helical segment. At Leu46–Gln59 the chain is on the mitochondrial matrix side. Residues Glu60 to Met87 form a helical membrane-spanning segment. The Mitochondrial intermembrane segment spans residues Asp88–Ser227. Cu cation-binding residues include His161, Cys196, Glu198, Cys200, His204, and Met207. Mg(2+) is bound at residue Glu198.

Belongs to the cytochrome c oxidase subunit 2 family. Component of the cytochrome c oxidase (complex IV, CIV), a multisubunit enzyme composed of 14 subunits. The complex is composed of a catalytic core of 3 subunits MT-CO1, MT-CO2 and MT-CO3, encoded in the mitochondrial DNA, and 11 supernumerary subunits COX4I, COX5A, COX5B, COX6A, COX6B, COX6C, COX7A, COX7B, COX7C, COX8 and NDUFA4, which are encoded in the nuclear genome. The complex exists as a monomer or a dimer and forms supercomplexes (SCs) in the inner mitochondrial membrane with NADH-ubiquinone oxidoreductase (complex I, CI) and ubiquinol-cytochrome c oxidoreductase (cytochrome b-c1 complex, complex III, CIII), resulting in different assemblies (supercomplex SCI(1)III(2)IV(1) and megacomplex MCI(2)III(2)IV(2)). Found in a complex with TMEM177, COA6, COX18, COX20, SCO1 and SCO2. Interacts with TMEM177 in a COX20-dependent manner. Interacts with COX20. Interacts with COX16. Cu cation serves as cofactor.

The protein resides in the mitochondrion inner membrane. It carries out the reaction 4 Fe(II)-[cytochrome c] + O2 + 8 H(+)(in) = 4 Fe(III)-[cytochrome c] + 2 H2O + 4 H(+)(out). Its function is as follows. Component of the cytochrome c oxidase, the last enzyme in the mitochondrial electron transport chain which drives oxidative phosphorylation. The respiratory chain contains 3 multisubunit complexes succinate dehydrogenase (complex II, CII), ubiquinol-cytochrome c oxidoreductase (cytochrome b-c1 complex, complex III, CIII) and cytochrome c oxidase (complex IV, CIV), that cooperate to transfer electrons derived from NADH and succinate to molecular oxygen, creating an electrochemical gradient over the inner membrane that drives transmembrane transport and the ATP synthase. Cytochrome c oxidase is the component of the respiratory chain that catalyzes the reduction of oxygen to water. Electrons originating from reduced cytochrome c in the intermembrane space (IMS) are transferred via the dinuclear copper A center (CU(A)) of subunit 2 and heme A of subunit 1 to the active site in subunit 1, a binuclear center (BNC) formed by heme A3 and copper B (CU(B)). The BNC reduces molecular oxygen to 2 water molecules using 4 electrons from cytochrome c in the IMS and 4 protons from the mitochondrial matrix. This chain is Cytochrome c oxidase subunit 2 (MT-CO2), found in Antilocapra americana (Pronghorn).